Reading from the N-terminus, the 328-residue chain is MNDNAFTFQTLHPETIMDALFEQGIRVDSGLTPLNSYENRVYQFQDEDRRRFVVKFYRPERWSVDQIREEHQFALELVKDEVPVAAPLAFNGQTLLAHQGYHYAIFPSVGGRQFEADNIDQMEAVGRYLGRLHQTGRKRPFTFRPDIGLAEYLFEPRQVFEDAALIPSGQKAAFLKATDTLLSAVTECWRTDFATLRLHGDCHAGNILWRDGPLFVDLDDARNGPAIQDLWMLLNGDKAEQRMQLETIIEAYEEISEFDTAEIGLIEPLRAMRLVYYLAWLIRRWGDPAFPKNFPWLTGEDYWQRQTTTFIEQTKILHEPPLQLTPMY.

Aspartate 201 acts as the Proton acceptor in catalysis. Residues asparagine 206 and aspartate 217 each contribute to the Mg(2+) site. Aspartate 217 is a catalytic residue.

It belongs to the SrkA/RdoA protein kinase family. Monomer. Requires Mg(2+) as cofactor.

It is found in the cytoplasm. The catalysed reaction is L-seryl-[protein] + ATP = O-phospho-L-seryl-[protein] + ADP + H(+). It carries out the reaction L-threonyl-[protein] + ATP = O-phospho-L-threonyl-[protein] + ADP + H(+). Its function is as follows. A protein kinase that phosphorylates Ser and Thr residues. Probably acts to suppress the effects of stress linked to accumulation of reactive oxygen species. Probably involved in the extracytoplasmic stress response. The polypeptide is Stress response kinase A (Salmonella choleraesuis (strain SC-B67)).